The following is a 268-amino-acid chain: Undecaprenyl-diphosphatase (268 aa).

Helical transmembrane passes span 5-25 (SIIS…IPVS), 43-63 (GNTF…LVYF), 84-104 (LSVL…HGFI), 109-129 (FETP…LYVI), 184-204 (AAEF…ALDL), 213-233 (IDDI…GIFV), and 248-268 (PFAI…WLLG).

It belongs to the UppP family.

Its subcellular location is the cell inner membrane. It catalyses the reaction di-trans,octa-cis-undecaprenyl diphosphate + H2O = di-trans,octa-cis-undecaprenyl phosphate + phosphate + H(+). In terms of biological role, catalyzes the dephosphorylation of undecaprenyl diphosphate (UPP). Confers resistance to bacitracin. The chain is Undecaprenyl-diphosphatase from Sinorhizobium medicae (strain WSM419) (Ensifer medicae).